The following is a 523-amino-acid chain: MSDVVPVRNALISVSDKMGLADFAAGLSAAGVTIYSTGGTRAHLEQSGIKVEDVAEYTGFPEMLDGRVKTLHPRIFAGILARRDLDDHMDTIADHDIEPFDLVVVNLYPFAATVSRSGATRAECIEQIDIGGPSLVRAAAKNHGDVAIATSPEQYGDVLDQLETLGGTTDELRTQLAAEAFDHTAGYDRAIADYMQGDAVGGEFPASMHVSLRRKTQLRYGENPHQRAALYSDSSDRSANLVSARQISGKELSYNNLLDLDAALDIARGFAEPAVSVIKHNNPCGAATGDTLSEAVDKAMAGDPLSAFGSVIGMNRTLDEATAEFLCQPGLFIEAIVAPDFEAGAVGLLTTKPRWKDNVRLMQVGRLDEPARKVSRRFISGGMLVQDADRMVSSPLQWNTVTETPVDDDLWDDISFGWEMVRHVKSNAIVLAKDTSLIGVGAGQMSRVDSVEISIKKAAERSEGSILASDAFFPFPDSIEAAAKAGVLAIIQPGGSRRDDEVIAACDEHEIAMVFTGRRHFKH.

The MGS-like domain occupies 1-150 (MSDVVPVRNA…KNHGDVAIAT (150 aa)).

Belongs to the PurH family.

It catalyses the reaction (6R)-10-formyltetrahydrofolate + 5-amino-1-(5-phospho-beta-D-ribosyl)imidazole-4-carboxamide = 5-formamido-1-(5-phospho-D-ribosyl)imidazole-4-carboxamide + (6S)-5,6,7,8-tetrahydrofolate. The catalysed reaction is IMP + H2O = 5-formamido-1-(5-phospho-D-ribosyl)imidazole-4-carboxamide. It participates in purine metabolism; IMP biosynthesis via de novo pathway; 5-formamido-1-(5-phospho-D-ribosyl)imidazole-4-carboxamide from 5-amino-1-(5-phospho-D-ribosyl)imidazole-4-carboxamide (10-formyl THF route): step 1/1. The protein operates within purine metabolism; IMP biosynthesis via de novo pathway; IMP from 5-formamido-1-(5-phospho-D-ribosyl)imidazole-4-carboxamide: step 1/1. This chain is Bifunctional purine biosynthesis protein PurH, found in Rhodopirellula baltica (strain DSM 10527 / NCIMB 13988 / SH1).